The primary structure comprises 157 residues: Ribosome maturation factor RimP (157 aa).

The protein belongs to the RimP family.

It localises to the cytoplasm. Functionally, required for maturation of 30S ribosomal subunits. The protein is Ribosome maturation factor RimP of Synechococcus sp. (strain JA-3-3Ab) (Cyanobacteria bacterium Yellowstone A-Prime).